The primary structure comprises 178 residues: RNA-binding protein (178 aa).

A disordered region spans residues 108–178; sequence SGFQKPKIGS…KGKGRRGGKR (71 aa). Basic residues predominate over residues 168 to 178; the sequence is SKGKGRRGGKR.

The protein belongs to the phytoreovirus RNA-binding protein family.

The protein resides in the host cytoplasm. Constituent of viral factories. Binds to ssRNA and dsRNA. The protein is RNA-binding protein of Wound tumor virus (strain NJ) (WTV).